A 437-amino-acid chain; its full sequence is Enolase 2 (437 aa).

Gln-162 contributes to the (2R)-2-phosphoglycerate binding site. Glu-204 serves as the catalytic Proton donor. Residues Asp-251, Glu-297, and Asp-324 each coordinate Mg(2+). Residues Lys-349, Arg-378, Ser-379, and Lys-400 each coordinate (2R)-2-phosphoglycerate. Lys-349 (proton acceptor) is an active-site residue.

It belongs to the enolase family. The cofactor is Mg(2+).

The protein localises to the cytoplasm. The protein resides in the secreted. It is found in the cell surface. The enzyme catalyses (2R)-2-phosphoglycerate = phosphoenolpyruvate + H2O. Its pathway is carbohydrate degradation; glycolysis; pyruvate from D-glyceraldehyde 3-phosphate: step 4/5. Its function is as follows. Catalyzes the reversible conversion of 2-phosphoglycerate (2-PG) into phosphoenolpyruvate (PEP). It is essential for the degradation of carbohydrates via glycolysis. The protein is Enolase 2 of Chlorobaculum tepidum (strain ATCC 49652 / DSM 12025 / NBRC 103806 / TLS) (Chlorobium tepidum).